The primary structure comprises 78 residues: Translational regulator CsrA (78 aa).

The protein belongs to the CsrA/RsmA family. Homodimer; the beta-strands of each monomer intercalate to form a hydrophobic core, while the alpha-helices form wings that extend away from the core.

It localises to the cytoplasm. Functionally, a translational regulator that binds mRNA to regulate translation initiation and/or mRNA stability. Usually binds in the 5'-UTR at or near the Shine-Dalgarno sequence preventing ribosome-binding, thus repressing translation. Its main target seems to be the major flagellin gene, while its function is anatagonized by FliW. In Borrelia turicatae (strain 91E135), this protein is Translational regulator CsrA.